Consider the following 250-residue polypeptide: MAEIVPLRVQLIAKTDFIAPPDIDWSTDADGGPALVEFAGRACYQSWSKPNPRTATNESYLRHVIEVGHLSVLEHASATFYITGISRSCTHELIRHRHFSYSQLSQRFVPEDDSNVVLPPAVEDDPELVALVRKATDASRAAYVELLEKLESTLADVPNAVLRRKQARQAARSVLPNATETRIVVTGNYRAWRHFIAMRASEHADVEIRRLAIACLRQLADLAPSIFGDFDIATLADGTEVAISPLVYEG.

In terms of domain architecture, ThyX spans 7–233; sequence LRVQLIAKTD…PSIFGDFDIA (227 aa). FAD contacts are provided by residues serine 71, 95-97, and glutamine 103; that span reads RHR. Residues 92–95, 103–107, and arginine 172 each bind dUMP; these read ELIR and QLSQR. Positions 95–105 match the ThyX motif motif; sequence RHRHFSYSQLS. FAD contacts are provided by residues 188-190 and histidine 194; that span reads NYR. Residue arginine 199 coordinates dUMP. The active-site Involved in ionization of N3 of dUMP, leading to its activation is arginine 199.

It belongs to the thymidylate synthase ThyX family. Homotetramer. Requires FAD as cofactor.

It catalyses the reaction dUMP + (6R)-5,10-methylene-5,6,7,8-tetrahydrofolate + NADPH + H(+) = dTMP + (6S)-5,6,7,8-tetrahydrofolate + NADP(+). The protein operates within pyrimidine metabolism; dTTP biosynthesis. Catalyzes the reductive methylation of 2'-deoxyuridine-5'-monophosphate (dUMP) to 2'-deoxythymidine-5'-monophosphate (dTMP) while utilizing 5,10-methylenetetrahydrofolate (mTHF) as the methyl donor, and NADPH and FADH(2) as the reductant. This Mycobacteroides abscessus (strain ATCC 19977 / DSM 44196 / CCUG 20993 / CIP 104536 / JCM 13569 / NCTC 13031 / TMC 1543 / L948) (Mycobacterium abscessus) protein is Flavin-dependent thymidylate synthase.